Consider the following 669-residue polypeptide: Armadillo repeat-containing protein gudu (669 aa).

Polar residues predominate over residues 1–10 (MIGTSSGTSH). Residues 1–53 (MIGTSSGTSHNRSRKKKEQCGSCPNRFSKDKRQVAAEDSDTTEVESSTDEEER) are disordered. The segment covering 37-51 (EDSDTTEVESSTDEE) has biased composition (acidic residues). ARM repeat units follow at residues 100–139 (QINQFAISDIGGLDVLVNILECSDTKCCLGALKVLSDITL), 141–180 (IDIRKTIVDLDGIPLIVDILNSSMKDLKTMAAETLANVCK), 240–279 (KHNMEQMRKSGIVPLMAQLLKSCHIDVVIPIMGTVRKCSS), 281–320 (PKFQLAITTEGMIPDIVSHLSSENTELKMEGSTAIYKCAF), 322–365 (GTTR…MCAV), 367–406 (DANVKVLDQLRTVNHLVALLNDECDEVLTNVTGAISECVR), 408–447 (QSNREQLRQAGGLPAMVSLLNSSHAPLLENLAKGLKECAE), 492–531 (DSAELVRSLVGAMELVVGLLKSKDIMVLSAVCAAIATIAQ), 574–613 (GNNTEELGRLRTVTPIVTYMTSDNPLVHRSTAMALEKLSM), and 615–654 (PQNCITMHQSGVVPFLLECIGSTNKELQLAAAGCLRNIRE).

Highly expressed in testis.

Functionally, important for spermatogenesis where it may have a role in sperm individualization. This is Armadillo repeat-containing protein gudu from Drosophila melanogaster (Fruit fly).